Consider the following 75-residue polypeptide: OcyC3 (75 aa).

Positions 1–22 are cleaved as a signal peptide; it reads MQYKTFLVISLAYLLVADEAAA. A propeptide spanning residues 51-75 is cleaved from the precursor; the sequence is EINNVFEPYHENLDLELERFLSQLQ.

Expressed by the venom gland.

It localises to the secreted. It is found in the target cell membrane. Its function is as follows. Amphipathic peptide with probable antimicrobial activity. May act by disrupting the integrity of the bacterial cell membrane. The sequence is that of OcyC3 from Opisthacanthus cayaporum (South American scorpion).